The sequence spans 325 residues: Tetraacyldisaccharide 4'-kinase (325 aa).

Residue 55–62 (TAGGNGKT) coordinates ATP.

It belongs to the LpxK family.

It carries out the reaction a lipid A disaccharide + ATP = a lipid IVA + ADP + H(+). Its pathway is glycolipid biosynthesis; lipid IV(A) biosynthesis; lipid IV(A) from (3R)-3-hydroxytetradecanoyl-[acyl-carrier-protein] and UDP-N-acetyl-alpha-D-glucosamine: step 6/6. Transfers the gamma-phosphate of ATP to the 4'-position of a tetraacyldisaccharide 1-phosphate intermediate (termed DS-1-P) to form tetraacyldisaccharide 1,4'-bis-phosphate (lipid IVA). In Salmonella agona (strain SL483), this protein is Tetraacyldisaccharide 4'-kinase.